Here is a 365-residue protein sequence, read N- to C-terminus: Phosphatidylcholine:ceramide cholinephosphotransferase 2 (365 aa).

Positions 9 to 50 (LEGHLESQTNNSTNTYTSPTEAVEEEDKNGKGKPKTLSNGLR) are disordered. Positions 15–28 (SQTNNSTNTYTSPT) are enriched in low complexity. Helical transmembrane passes span 80-100 (GIAFVYALFNLILTTVMITVV), 128-148 (FSVSEINGMVLVGLWLTQWLF), 159-179 (FFFIMGTLYLYRCITMYVTTL), 219-239 (ILCGDFLFSGHTVVLTLTYLF), and 248-268 (FWWYHLVCWLLSAAGIICILV). His-229 is an active-site residue. Residues His-272 and Asp-276 contribute to the active site. Residues 273 to 290 (YTVDVIIAYYITTRLFWW) form a helical membrane-spanning segment. Residues 291–365 (YHSMANEKNL…KIGEDNEKST (75 aa)) are Cytoplasmic-facing. Residues Cys-331, Cys-332, Cys-343, and Cys-348 are each lipidated (S-palmitoyl cysteine).

Belongs to the sphingomyelin synthase family. Post-translationally, palmitoylated on Cys-331, Cys-332, Cys-343 and Cys-348; which plays an important role in plasma membrane localization. As to expression, expression restricted to late round spermatids and elongating spermatids but not detected in late elongate spermatids and Sertoli cells (at protein level).

It localises to the cell membrane. The protein resides in the golgi apparatus membrane. The enzyme catalyses an N-acylsphing-4-enine + a 1,2-diacyl-sn-glycero-3-phosphocholine = a sphingomyelin + a 1,2-diacyl-sn-glycerol. It carries out the reaction an N-acylsphinganine + a 1,2-diacyl-sn-glycero-3-phosphocholine = an N-acylsphinganine-1-phosphocholine + a 1,2-diacyl-sn-glycerol. The catalysed reaction is an N-acyl-(4R)-4-hydroxysphinganine + a 1,2-diacyl-sn-glycero-3-phosphocholine = an N-acyl-(4R)-4-hydroxysphinganine-phosphocholine + a 1,2-diacyl-sn-glycerol. It catalyses the reaction an N-acylsphing-4-enine + a 1,2-diacyl-sn-glycero-3-phosphoethanolamine = an N-acylsphing-4-enine 1-phosphoethanolamine + a 1,2-diacyl-sn-glycerol. The enzyme catalyses an N-acylsphinganine + a 1,2-diacyl-sn-glycero-3-phosphoethanolamine = an N-acylsphinganine-1-phosphoethanolamine + a 1,2-diacyl-sn-glycerol. It carries out the reaction an N-acyl-(4R)-4-hydroxysphinganine + a 1,2-diacyl-sn-glycero-3-phosphoethanolamine = an N-acyl-(4R)-4-hydroxysphinganine-1-phosphoethanolamine + a 1,2-diacyl-sn-glycerol. The catalysed reaction is 1,2-dihexadecanoyl-sn-glycero-3-phosphocholine + an N-acylsphing-4-enine = 1,2-dihexadecanoyl-sn-glycerol + a sphingomyelin. It catalyses the reaction 1-(9Z-octadecenoyl)-2-acyl-sn-3-glycerol + a sphingomyelin = a 1-(9Z-octadecenoyl)-2-acyl-sn-glycero-3-phosphocholine + an N-acylsphing-4-enine. The enzyme catalyses N-hexadecanoylsphinganine + a 1,2-diacyl-sn-glycero-3-phosphocholine = N-hexadecanoyl-sphinganine-1-phosphocholine + a 1,2-diacyl-sn-glycerol. It carries out the reaction N-hexadecanoyl-(4R)-hydroxysphinganine + a 1,2-diacyl-sn-glycero-3-phosphocholine = N-hexadecanoyl-(4R)-hydroxysphinganine-phosphocholine + a 1,2-diacyl-sn-glycerol. The catalysed reaction is N-hexadecanoylsphinganine + a 1,2-diacyl-sn-glycero-3-phosphoethanolamine = N-hexadecanoyl-sphinganine-1-phosphoethanolamine + a 1,2-diacyl-sn-glycerol. It catalyses the reaction N-hexadecanoyl-(4R)-hydroxysphinganine + a 1,2-diacyl-sn-glycero-3-phosphoethanolamine = N-hexadecanoyl-(4R)-hydroxysphinganine-1-phosphoethanolamine + a 1,2-diacyl-sn-glycerol. It participates in sphingolipid metabolism. Its function is as follows. Sphingomyelin synthase that primarily contributes to sphingomyelin synthesis and homeostasis at the plasma membrane. Catalyzes the reversible transfer of phosphocholine moiety in sphingomyelin biosynthesis: in the forward reaction transfers phosphocholine head group of phosphatidylcholine (PC) on to ceramide (CER) to form ceramide phosphocholine (sphingomyelin, SM) and diacylglycerol (DAG) as by-product, and in the reverse reaction transfers phosphocholine from SM to DAG to form PC and CER. The direction of the reaction appears to depend on the levels of CER and DAG in the plasma membrane. Does not use free phosphorylcholine or CDP-choline as donors. Can also transfer phosphoethanolamine head group of phosphatidylethanolamine (PE) on to ceramide (CER) to form ceramide phosphoethanolamine (CPE). Regulates receptor-mediated signal transduction via mitogenic DAG and proapoptotic CER, as well as via SM, a structural component of membrane rafts that serve as platforms for signal transduction and protein sorting. To a lesser extent, plays a role in secretory transport via regulation of DAG pool at the Golgi apparatus and its downstream effects on PRKD1. Required for normal bone matrix mineralization. The protein is Phosphatidylcholine:ceramide cholinephosphotransferase 2 (Sgms2) of Rattus norvegicus (Rat).